We begin with the raw amino-acid sequence, 254 residues long: Type III pantothenate kinase (254 aa).

6–13 (DVGNSNIV) is a binding site for ATP. Substrate-binding positions include tyrosine 100 and 107–110 (GADR). The active-site Proton acceptor is aspartate 109. A K(+)-binding site is contributed by aspartate 129. Threonine 132 is a binding site for ATP. Residue threonine 184 coordinates substrate.

It belongs to the type III pantothenate kinase family. Homodimer. NH4(+) serves as cofactor. It depends on K(+) as a cofactor.

It is found in the cytoplasm. The enzyme catalyses (R)-pantothenate + ATP = (R)-4'-phosphopantothenate + ADP + H(+). It participates in cofactor biosynthesis; coenzyme A biosynthesis; CoA from (R)-pantothenate: step 1/5. Catalyzes the phosphorylation of pantothenate (Pan), the first step in CoA biosynthesis. In Citrifermentans bemidjiense (strain ATCC BAA-1014 / DSM 16622 / JCM 12645 / Bem) (Geobacter bemidjiensis), this protein is Type III pantothenate kinase.